A 206-amino-acid polypeptide reads, in one-letter code: Ras-related protein Ral-B (206 aa).

21 to 29 (GSGGVGKSA) serves as a coordination point for GTP. The Effector region signature appears at 43–51 (YEPTKADSY). GTP is bound by residues 68-72 (DTAGQ), 128-131 (NKSD), and 158-160 (SAK). A compositionally biased stretch (basic and acidic residues) spans 180 to 189 (KMSENKDKNG). The tract at residues 180 to 206 (KMSENKDKNGKKSGKNKKSFKERCCLL) is disordered. Position 203 is a cysteine methyl ester (C203). C203 carries the S-geranylgeranyl cysteine lipid modification. A propeptide spans 204–206 (CLL) (removed in mature form).

The protein belongs to the small GTPase superfamily. Ras family. In terms of assembly, interacts with EXOC2/Sec5 and EXOC8/Exo84. Interacts (via effector domain) with RALBP1. Prenylation is essential for membrane localization. In terms of processing, the farnesylated form confers resistance to the proapoptotic and anti-anchorage-dependent growth effects of some geranylgeranyltransferase I inhibitors.

Its subcellular location is the cell membrane. It is found in the midbody. It catalyses the reaction GTP + H2O = GDP + phosphate + H(+). Alternates between an inactive form bound to GDP and an active form bound to GTP. Activated by a guanine nucleotide-exchange factor (GEF) and inactivated by a GTPase-activating protein (GAP). Functionally, multifunctional GTPase involved in a variety of cellular processes including gene expression, cell migration, cell proliferation, oncogenic transformation and membrane trafficking. Accomplishes its multiple functions by interacting with distinct downstream effectors. Acts as a GTP sensor for GTP-dependent exocytosis of dense core vesicles. Required both to stabilize the assembly of the exocyst complex and to localize functional exocyst complexes to the leading edge of migrating cells. Required for suppression of apoptosis. In late stages of cytokinesis, upon completion of the bridge formation between dividing cells, mediates exocyst recruitment to the midbody to drive abscission. Involved in ligand-dependent receptor mediated endocytosis of the EGF and insulin receptors. This Macaca fascicularis (Crab-eating macaque) protein is Ras-related protein Ral-B (RALB).